Reading from the N-terminus, the 116-residue chain is MDPLIQELTKEQLRDDMPDFRAGDTVRVHVRVVEGTHERIQMFEGVVIKRKGAGISATYTVRKMSSGIGVERTFPVNDPRVAKVEVLRHGRVRRAKLYYLRERHGKAARIAEKRRG.

It belongs to the bacterial ribosomal protein bL19 family.

In terms of biological role, this protein is located at the 30S-50S ribosomal subunit interface and may play a role in the structure and function of the aminoacyl-tRNA binding site. This Lactobacillus gasseri (strain ATCC 33323 / DSM 20243 / BCRC 14619 / CIP 102991 / JCM 1131 / KCTC 3163 / NCIMB 11718 / NCTC 13722 / AM63) protein is Large ribosomal subunit protein bL19.